A 227-amino-acid polypeptide reads, in one-letter code: Phosphoribosylformylglycinamidine synthase subunit PurQ (227 aa).

In terms of domain architecture, Glutamine amidotransferase type-1 spans 2 to 227 (RWAIVRFPGA…FLGLVREVAR (226 aa)). Residue Cys85 is the Nucleophile of the active site. Residues His200 and Glu202 contribute to the active site.

Part of the FGAM synthase complex composed of 1 PurL, 1 PurQ and 2 PurS subunits.

The protein resides in the cytoplasm. The enzyme catalyses N(2)-formyl-N(1)-(5-phospho-beta-D-ribosyl)glycinamide + L-glutamine + ATP + H2O = 2-formamido-N(1)-(5-O-phospho-beta-D-ribosyl)acetamidine + L-glutamate + ADP + phosphate + H(+). It carries out the reaction L-glutamine + H2O = L-glutamate + NH4(+). It participates in purine metabolism; IMP biosynthesis via de novo pathway; 5-amino-1-(5-phospho-D-ribosyl)imidazole from N(2)-formyl-N(1)-(5-phospho-D-ribosyl)glycinamide: step 1/2. Functionally, part of the phosphoribosylformylglycinamidine synthase complex involved in the purines biosynthetic pathway. Catalyzes the ATP-dependent conversion of formylglycinamide ribonucleotide (FGAR) and glutamine to yield formylglycinamidine ribonucleotide (FGAM) and glutamate. The FGAM synthase complex is composed of three subunits. PurQ produces an ammonia molecule by converting glutamine to glutamate. PurL transfers the ammonia molecule to FGAR to form FGAM in an ATP-dependent manner. PurS interacts with PurQ and PurL and is thought to assist in the transfer of the ammonia molecule from PurQ to PurL. This chain is Phosphoribosylformylglycinamidine synthase subunit PurQ, found in Thermus thermophilus (strain ATCC BAA-163 / DSM 7039 / HB27).